The sequence spans 179 residues: Translation initiation factor IF-3 (179 aa).

The protein belongs to the IF-3 family. In terms of assembly, monomer.

The protein resides in the cytoplasm. Its function is as follows. IF-3 binds to the 30S ribosomal subunit and shifts the equilibrium between 70S ribosomes and their 50S and 30S subunits in favor of the free subunits, thus enhancing the availability of 30S subunits on which protein synthesis initiation begins. In Proteus hauseri, this protein is Translation initiation factor IF-3.